A 330-amino-acid polypeptide reads, in one-letter code: Ketol-acid reductoisomerase (NADP(+)) (330 aa).

Positions 2-181 (MEKYHETDAD…GATRAVVLET (180 aa)) constitute a KARI N-terminal Rossmann domain. Residues 25–28 (YGSQ), Arg-48, Ser-52, and 82–85 (DENQ) each bind NADP(+). The active site involves His-107. Gly-133 contributes to the NADP(+) binding site. One can recognise a KARI C-terminal knotted domain in the interval 182–327 (TFREETETDL…SELRAMMPQF (146 aa)). Mg(2+) is bound by residues Asp-190, Glu-194, Glu-226, and Glu-230. Ser-251 provides a ligand contact to substrate.

Belongs to the ketol-acid reductoisomerase family. Mg(2+) is required as a cofactor.

It catalyses the reaction (2R)-2,3-dihydroxy-3-methylbutanoate + NADP(+) = (2S)-2-acetolactate + NADPH + H(+). It carries out the reaction (2R,3R)-2,3-dihydroxy-3-methylpentanoate + NADP(+) = (S)-2-ethyl-2-hydroxy-3-oxobutanoate + NADPH + H(+). It participates in amino-acid biosynthesis; L-isoleucine biosynthesis; L-isoleucine from 2-oxobutanoate: step 2/4. It functions in the pathway amino-acid biosynthesis; L-valine biosynthesis; L-valine from pyruvate: step 2/4. In terms of biological role, involved in the biosynthesis of branched-chain amino acids (BCAA). Catalyzes an alkyl-migration followed by a ketol-acid reduction of (S)-2-acetolactate (S2AL) to yield (R)-2,3-dihydroxy-isovalerate. In the isomerase reaction, S2AL is rearranged via a Mg-dependent methyl migration to produce 3-hydroxy-3-methyl-2-ketobutyrate (HMKB). In the reductase reaction, this 2-ketoacid undergoes a metal-dependent reduction by NADPH to yield (R)-2,3-dihydroxy-isovalerate. The sequence is that of Ketol-acid reductoisomerase (NADP(+)) from Methanocorpusculum labreanum (strain ATCC 43576 / DSM 4855 / Z).